The chain runs to 485 residues: Glucagon receptor (485 aa).

Residues 1–26 (MPLTQLHCPHLLLLLLVLSCLPEAPS) form the signal peptide. The Extracellular segment spans residues 27-137 (AQVMDFLFEK…EIEVQKGVAK (111 aa)). 3 cysteine pairs are disulfide-bonded: Cys-44/Cys-68, Cys-59/Cys-101, and Cys-82/Cys-122. Asn-47, Asn-60, Asn-75, Asn-79, and Asn-118 each carry an N-linked (GlcNAc...) asparagine glycan. A helical transmembrane segment spans residues 138–162 (MYSSQQVMYTVGYSLSLGALLLALV). Residues 163 to 174 (ILLGLRKLHCTR) are Cytoplasmic-facing. Residues 175 to 199 (NYIHGNLFASFVLKAGSVLVIDWLL) traverse the membrane as a helical segment. Residues 200-226 (KTRYSQKIGDDLSVSVWLSDGAMAGCR) are Extracellular-facing. Cys-225 and Cys-295 are joined by a disulfide. Residues 227-250 (VATVIMQYGIIANYCWLLVEGVYL) form a helical membrane-spanning segment. Residues 251–264 (YSLLSLATFSERSF) are Cytoplasmic-facing. The chain crosses the membrane as a helical span at residues 265-286 (FSLYLGIGWGAPLLFVIPWVVV). Residues 287–304 (KCLFENVQCWTSNDNMGF) are Extracellular-facing. Residues 305-327 (WWILRIPVFLALLINFFIFVHII) traverse the membrane as a helical segment. Topologically, residues 328 to 351 (HLLVAKLRAHQMHYADYKFRLARS) are cytoplasmic. The segment at 351–354 (STLT) is important for allosteric inhibitor binding. A helical transmembrane segment spans residues 352–370 (TLTLIPLLGVHEVVFAFVT). The Extracellular portion of the chain corresponds to 371 to 382 (DEHAQGTLRSTK). A helical transmembrane segment spans residues 383–403 (LFFDLFLSSFQGLLVAVLYCF). The Cytoplasmic segment spans residues 404–485 (LNKEVQAELM…SLPRLADSPT (82 aa)). Polar residues predominate over residues 457 to 475 (AGSSSGTGCVPSMETSLAS). A disordered region spans residues 457–485 (AGSSSGTGCVPSMETSLASSLPRLADSPT). A phosphoserine mark is found at Ser-460 and Ser-476.

Belongs to the G-protein coupled receptor 2 family. In terms of processing, ligand-binding promotes phosphorylation of serine residues in the C-terminal cytoplasmic domain. Phosphorylation is important for receptor endocytosis after ligand-binding. Expressed predominantly in liver, kidney, adrenal, lung and stomach, while lower levels of expression are detected in brown and white adipose tissue, cerebellum, duodenum and heart.

It localises to the cell membrane. Functionally, G-protein coupled receptor for glucagon that plays a central role in the regulation of blood glucose levels and glucose homeostasis. Regulates the rate of hepatic glucose production by promoting glycogen hydrolysis and gluconeogenesis. Plays an important role in mediating the responses to fasting. Ligand binding causes a conformation change that triggers signaling via guanine nucleotide-binding proteins (G proteins) and modulates the activity of down-stream effectors, such as adenylate cyclase. Promotes activation of adenylate cyclase. Besides, plays a role in signaling via a phosphatidylinositol-calcium second messenger system. This chain is Glucagon receptor (Gcgr), found in Mus musculus (Mouse).